A 422-amino-acid polypeptide reads, in one-letter code: Phosphoglycerate kinase (422 aa).

Residues 24-26, 64-67, Arg129, and Arg171 each bind substrate; these read DLN and HLGR. ATP is bound by residues Lys222, Gly309, Glu340, and 370-373; that span reads DIDT.

This sequence belongs to the phosphoglycerate kinase family. Monomer.

The protein localises to the cytoplasm. It carries out the reaction (2R)-3-phosphoglycerate + ATP = (2R)-3-phospho-glyceroyl phosphate + ADP. It functions in the pathway carbohydrate degradation; glycolysis; pyruvate from D-glyceraldehyde 3-phosphate: step 2/5. In Ureaplasma parvum serovar 3 (strain ATCC 700970), this protein is Phosphoglycerate kinase (pgk).